Here is a 170-residue protein sequence, read N- to C-terminus: Peptide deformylase 2 (170 aa).

Residues cysteine 94 and histidine 136 each contribute to the Fe cation site. Residue glutamate 137 is part of the active site. A Fe cation-binding site is contributed by histidine 140.

Belongs to the polypeptide deformylase family. It depends on Fe(2+) as a cofactor.

The catalysed reaction is N-terminal N-formyl-L-methionyl-[peptide] + H2O = N-terminal L-methionyl-[peptide] + formate. In terms of biological role, removes the formyl group from the N-terminal Met of newly synthesized proteins. Requires at least a dipeptide for an efficient rate of reaction. N-terminal L-methionine is a prerequisite for activity but the enzyme has broad specificity at other positions. In Xanthomonas axonopodis pv. citri (strain 306), this protein is Peptide deformylase 2.